A 216-amino-acid polypeptide reads, in one-letter code: Guanylate kinase (216 aa).

Residues 11–189 form the Guanylate kinase-like domain; it reads GVLIVISGPS…AVKKIEAILL (179 aa). ATP is bound at residue 18–25; it reads GPSGAGKG.

This sequence belongs to the guanylate kinase family.

It is found in the cytoplasm. The catalysed reaction is GMP + ATP = GDP + ADP. Functionally, essential for recycling GMP and indirectly, cGMP. The polypeptide is Guanylate kinase (gmk) (Clostridium perfringens (strain 13 / Type A)).